The chain runs to 319 residues: Lipoyl synthase (319 aa).

[4Fe-4S] cluster is bound by residues Cys61, Cys66, Cys72, Cys87, Cys91, Cys94, and Ser300. Positions 73-289 (WDKKHATFMI…ESVAYSKGFL (217 aa)) constitute a Radical SAM core domain.

This sequence belongs to the radical SAM superfamily. Lipoyl synthase family. It depends on [4Fe-4S] cluster as a cofactor.

The protein localises to the cytoplasm. It carries out the reaction [[Fe-S] cluster scaffold protein carrying a second [4Fe-4S](2+) cluster] + N(6)-octanoyl-L-lysyl-[protein] + 2 oxidized [2Fe-2S]-[ferredoxin] + 2 S-adenosyl-L-methionine + 4 H(+) = [[Fe-S] cluster scaffold protein] + N(6)-[(R)-dihydrolipoyl]-L-lysyl-[protein] + 4 Fe(3+) + 2 hydrogen sulfide + 2 5'-deoxyadenosine + 2 L-methionine + 2 reduced [2Fe-2S]-[ferredoxin]. It functions in the pathway protein modification; protein lipoylation via endogenous pathway; protein N(6)-(lipoyl)lysine from octanoyl-[acyl-carrier-protein]: step 2/2. Catalyzes the radical-mediated insertion of two sulfur atoms into the C-6 and C-8 positions of the octanoyl moiety bound to the lipoyl domains of lipoate-dependent enzymes, thereby converting the octanoylated domains into lipoylated derivatives. This chain is Lipoyl synthase, found in Rhodopseudomonas palustris (strain BisB18).